Consider the following 94-residue polypeptide: Aspartyl/glutamyl-tRNA(Asn/Gln) amidotransferase subunit C (94 aa).

Belongs to the GatC family. Heterotrimer of A, B and C subunits.

The enzyme catalyses L-glutamyl-tRNA(Gln) + L-glutamine + ATP + H2O = L-glutaminyl-tRNA(Gln) + L-glutamate + ADP + phosphate + H(+). The catalysed reaction is L-aspartyl-tRNA(Asn) + L-glutamine + ATP + H2O = L-asparaginyl-tRNA(Asn) + L-glutamate + ADP + phosphate + 2 H(+). Its function is as follows. Allows the formation of correctly charged Asn-tRNA(Asn) or Gln-tRNA(Gln) through the transamidation of misacylated Asp-tRNA(Asn) or Glu-tRNA(Gln) in organisms which lack either or both of asparaginyl-tRNA or glutaminyl-tRNA synthetases. The reaction takes place in the presence of glutamine and ATP through an activated phospho-Asp-tRNA(Asn) or phospho-Glu-tRNA(Gln). The chain is Aspartyl/glutamyl-tRNA(Asn/Gln) amidotransferase subunit C from Campylobacter jejuni subsp. doylei (strain ATCC BAA-1458 / RM4099 / 269.97).